Consider the following 97-residue polypeptide: MSVTNVSNETNATKAVFDPPVGITAPPIDELLDKVTSKYALVIFAAKRARQINSFYHQADEGVFEFIGPLVTPQPGEKPLSIALREINAGLLDHEEG.

Belongs to the RNA polymerase subunit omega family. The RNAP catalytic core consists of 2 alpha, 1 beta, 1 beta' and 1 omega subunit. When a sigma factor is associated with the core the holoenzyme is formed, which can initiate transcription.

The catalysed reaction is RNA(n) + a ribonucleoside 5'-triphosphate = RNA(n+1) + diphosphate. Functionally, promotes RNA polymerase assembly. Latches the N- and C-terminal regions of the beta' subunit thereby facilitating its interaction with the beta and alpha subunits. The protein is DNA-directed RNA polymerase subunit omega of Corynebacterium glutamicum (strain ATCC 13032 / DSM 20300 / JCM 1318 / BCRC 11384 / CCUG 27702 / LMG 3730 / NBRC 12168 / NCIMB 10025 / NRRL B-2784 / 534).